Reading from the N-terminus, the 413-residue chain is 3-isopropylmalate dehydratase large subunit (413 aa).

C295, C353, and C356 together coordinate [4Fe-4S] cluster.

The protein belongs to the aconitase/IPM isomerase family. LeuC type 2 subfamily. In terms of assembly, heterodimer of LeuC and LeuD. Requires [4Fe-4S] cluster as cofactor.

It carries out the reaction (2R,3S)-3-isopropylmalate = (2S)-2-isopropylmalate. It functions in the pathway amino-acid biosynthesis; L-leucine biosynthesis; L-leucine from 3-methyl-2-oxobutanoate: step 2/4. Its function is as follows. Catalyzes the isomerization between 2-isopropylmalate and 3-isopropylmalate, via the formation of 2-isopropylmaleate. The polypeptide is 3-isopropylmalate dehydratase large subunit (Pyrobaculum calidifontis (strain DSM 21063 / JCM 11548 / VA1)).